We begin with the raw amino-acid sequence, 302 residues long: Homoserine kinase (302 aa).

An ATP-binding site is contributed by K90 to A100.

It belongs to the GHMP kinase family. Homoserine kinase subfamily.

The protein resides in the cytoplasm. The enzyme catalyses L-homoserine + ATP = O-phospho-L-homoserine + ADP + H(+). The protein operates within amino-acid biosynthesis; L-threonine biosynthesis; L-threonine from L-aspartate: step 4/5. Its function is as follows. Catalyzes the ATP-dependent phosphorylation of L-homoserine to L-homoserine phosphate. The polypeptide is Homoserine kinase (Methanococcus vannielii (strain ATCC 35089 / DSM 1224 / JCM 13029 / OCM 148 / SB)).